The primary structure comprises 272 residues: Small ribosomal subunit protein uS2 (272 aa).

The tract at residues 244 to 272 is disordered; that stretch reads EDDYEGAEGDLDLDSANEEESLEDNNEEE.

It belongs to the universal ribosomal protein uS2 family.

This Trichodesmium erythraeum (strain IMS101) protein is Small ribosomal subunit protein uS2.